A 249-amino-acid chain; its full sequence is Diphthine synthase (249 aa).

Residues aspartate 83, leucine 86, 111–112 (SI), leucine 163, and leucine 205 contribute to the S-adenosyl-L-methionine site.

This sequence belongs to the diphthine synthase family. As to quaternary structure, homodimer.

The enzyme catalyses 2-[(3S)-amino-3-carboxypropyl]-L-histidyl-[translation elongation factor 2] + 3 S-adenosyl-L-methionine = diphthine-[translation elongation factor 2] + 3 S-adenosyl-L-homocysteine + 3 H(+). It functions in the pathway protein modification; peptidyl-diphthamide biosynthesis. Its function is as follows. S-adenosyl-L-methionine-dependent methyltransferase that catalyzes the trimethylation of the amino group of the modified target histidine residue in translation elongation factor 2 (EF-2), to form an intermediate called diphthine. The three successive methylation reactions represent the second step of diphthamide biosynthesis. In Pyrobaculum islandicum (strain DSM 4184 / JCM 9189 / GEO3), this protein is Diphthine synthase.